The following is a 747-amino-acid chain: Polyribonucleotide nucleotidyltransferase (747 aa).

2 residues coordinate Mg(2+): D487 and D493. The 60-residue stretch at 554 to 613 (PSTTTIKIDKDKIRDIIGPGGKIIKEICETSGAKIDISDDGTVSVYAADRDKLKIASDKI) folds into the KH domain. Positions 623–691 (GEIFNGTVTK…NKGKAKLTIK (69 aa)) constitute an S1 motif domain. The tract at residues 694 to 716 (DKDKSLNNPKPQNSINNAKENSE) is disordered. The segment covering 699–712 (LNNPKPQNSINNAK) has biased composition (polar residues).

The protein belongs to the polyribonucleotide nucleotidyltransferase family. The cofactor is Mg(2+).

The protein localises to the cytoplasm. The catalysed reaction is RNA(n+1) + phosphate = RNA(n) + a ribonucleoside 5'-diphosphate. Its function is as follows. Involved in mRNA degradation. Catalyzes the phosphorolysis of single-stranded polyribonucleotides processively in the 3'- to 5'-direction. The sequence is that of Polyribonucleotide nucleotidyltransferase from Rickettsia canadensis (strain McKiel).